The following is a 206-amino-acid chain: Large ribosomal subunit protein eL13z (206 aa).

Residues 185–206 are disordered; that stretch reads TNKRHAGARAKRAAEAEKEEKK. Over residues 186-195 the composition is skewed to basic residues; that stretch reads NKRHAGARAK. The segment covering 196–206 has biased composition (basic and acidic residues); that stretch reads RAAEAEKEEKK.

This sequence belongs to the eukaryotic ribosomal protein eL13 family.

The protein localises to the cytoplasm. This chain is Large ribosomal subunit protein eL13z (RPL13B), found in Arabidopsis thaliana (Mouse-ear cress).